The following is a 231-amino-acid chain: Large ribosomal subunit protein uL1 (231 aa).

Belongs to the universal ribosomal protein uL1 family. In terms of assembly, part of the 50S ribosomal subunit.

Binds directly to 23S rRNA. The L1 stalk is quite mobile in the ribosome, and is involved in E site tRNA release. Functionally, protein L1 is also a translational repressor protein, it controls the translation of the L11 operon by binding to its mRNA. The sequence is that of Large ribosomal subunit protein uL1 from Acinetobacter baumannii (strain AB307-0294).